The following is a 175-amino-acid chain: NADH-ubiquinone oxidoreductase chain 6 (175 aa).

6 consecutive transmembrane segments (helical) span residues 1 to 21 (MMTYVVFILSIVFVIGLIGSP), 25 to 45 (SPIYGGLGLIVSGGAGCGMVL), 47 to 67 (FGGSFLGLMVFLVYLGGMLVV), 88 to 108 (VVLGAFLLGLMMEFLAVLYVL), 115 to 137 (LVFKFSGLGDWVVYGMSDFGVFS), and 149 to 169 (YGVWLVVVTGWSLFVGVVVIM).

It belongs to the complex I subunit 6 family. As to quaternary structure, core subunit of respiratory chain NADH dehydrogenase (Complex I) which is composed of 45 different subunits.

The protein resides in the mitochondrion inner membrane. It catalyses the reaction a ubiquinone + NADH + 5 H(+)(in) = a ubiquinol + NAD(+) + 4 H(+)(out). Core subunit of the mitochondrial membrane respiratory chain NADH dehydrogenase (Complex I) which catalyzes electron transfer from NADH through the respiratory chain, using ubiquinone as an electron acceptor. Essential for the catalytic activity and assembly of complex I. This Hippopotamus amphibius (Hippopotamus) protein is NADH-ubiquinone oxidoreductase chain 6 (MT-ND6).